Reading from the N-terminus, the 539-residue chain is Chaperonin GroEL 1 (539 aa).

ATP-binding positions include 29-32 (TLGP), 86-90 (DGTTT), Gly-413, and Asp-495.

This sequence belongs to the chaperonin (HSP60) family. Forms a cylinder of 14 subunits composed of two heptameric rings stacked back-to-back. Interacts with the co-chaperonin GroES.

The protein localises to the cytoplasm. It carries out the reaction ATP + H2O + a folded polypeptide = ADP + phosphate + an unfolded polypeptide.. Together with its co-chaperonin GroES, plays an essential role in assisting protein folding. The GroEL-GroES system forms a nano-cage that allows encapsulation of the non-native substrate proteins and provides a physical environment optimized to promote and accelerate protein folding. This chain is Chaperonin GroEL 1, found in Mycobacterium bovis (strain ATCC BAA-935 / AF2122/97).